A 390-amino-acid chain; its full sequence is Methylthioribose-1-phosphate isomerase (390 aa).

Catalysis depends on aspartate 263, which acts as the Proton donor.

Belongs to the eIF-2B alpha/beta/delta subunits family. MtnA subfamily.

The protein localises to the cytoplasm. It localises to the nucleus. It carries out the reaction 5-(methylsulfanyl)-alpha-D-ribose 1-phosphate = 5-(methylsulfanyl)-D-ribulose 1-phosphate. Its pathway is amino-acid biosynthesis; L-methionine biosynthesis via salvage pathway; L-methionine from S-methyl-5-thio-alpha-D-ribose 1-phosphate: step 1/6. Catalyzes the interconversion of methylthioribose-1-phosphate (MTR-1-P) into methylthioribulose-1-phosphate (MTRu-1-P). The sequence is that of Methylthioribose-1-phosphate isomerase from Meyerozyma guilliermondii (strain ATCC 6260 / CBS 566 / DSM 6381 / JCM 1539 / NBRC 10279 / NRRL Y-324) (Yeast).